Here is a 154-residue protein sequence, read N- to C-terminus: 6,7-dimethyl-8-ribityllumazine synthase (154 aa).

5-amino-6-(D-ribitylamino)uracil-binding positions include Phe23, 57–59 (AFE), and 81–83 (AVI). Residue 86–87 (ST) coordinates (2S)-2-hydroxy-3-oxobutyl phosphate. The Proton donor role is filled by His89. Residue Phe114 coordinates 5-amino-6-(D-ribitylamino)uracil. Arg128 serves as a coordination point for (2S)-2-hydroxy-3-oxobutyl phosphate.

It belongs to the DMRL synthase family.

It catalyses the reaction (2S)-2-hydroxy-3-oxobutyl phosphate + 5-amino-6-(D-ribitylamino)uracil = 6,7-dimethyl-8-(1-D-ribityl)lumazine + phosphate + 2 H2O + H(+). It functions in the pathway cofactor biosynthesis; riboflavin biosynthesis; riboflavin from 2-hydroxy-3-oxobutyl phosphate and 5-amino-6-(D-ribitylamino)uracil: step 1/2. Its function is as follows. Catalyzes the formation of 6,7-dimethyl-8-ribityllumazine by condensation of 5-amino-6-(D-ribitylamino)uracil with 3,4-dihydroxy-2-butanone 4-phosphate. This is the penultimate step in the biosynthesis of riboflavin. The protein is 6,7-dimethyl-8-ribityllumazine synthase of Campylobacter jejuni subsp. jejuni serotype O:2 (strain ATCC 700819 / NCTC 11168).